Reading from the N-terminus, the 152-residue chain is Transcriptional regulator MraZ (152 aa).

SpoVT-AbrB domains are found at residues 5–52 (ASAI…PIHE) and 81–124 (AHEV…DEQS).

The protein belongs to the MraZ family. In terms of assembly, forms oligomers.

It is found in the cytoplasm. It localises to the nucleoid. The sequence is that of Transcriptional regulator MraZ from Shewanella baltica (strain OS195).